The chain runs to 343 residues: Ribosomal RNA small subunit methyltransferase C (343 aa).

Belongs to the methyltransferase superfamily. RsmC family. As to quaternary structure, monomer.

The protein resides in the cytoplasm. The catalysed reaction is guanosine(1207) in 16S rRNA + S-adenosyl-L-methionine = N(2)-methylguanosine(1207) in 16S rRNA + S-adenosyl-L-homocysteine + H(+). Specifically methylates the guanine in position 1207 of 16S rRNA in the 30S particle. The polypeptide is Ribosomal RNA small subunit methyltransferase C (Shigella flexneri serotype 5b (strain 8401)).